A 178-amino-acid chain; its full sequence is Cyclin-dependent kinase inhibitor 1B (178 aa).

Residues 1 to 11 are compositionally biased toward polar residues; it reads MSNVRVSNGSP. The segment at 1-31 is disordered; it reads MSNVRVSNGSPSLERMDARQAEYPKPSACRN. Ser10 bears the Phosphoserine; by UHMK1 mark. Residues 51-91 are interaction with CDK2; sequence DMEEASQRKWNFDFQNHKPLEGKYEWQEVEKGSLPEFYYRP. Tyr74 bears the Phosphotyrosine; by SRC mark. A disordered region spans residues 87–178; the sequence is FYYRPPRPPK…RTEENVSDGS (92 aa). Tyr88 carries the phosphotyrosine; by ABL, LYN, SRC and JAK2 modification. A Phosphotyrosine modification is found at Tyr89. Residues 104–113 show a composition bias toward polar residues; sequence QESQDVSGTR. The span at 126-137 shows a compositional bias: basic and acidic residues; that stretch reads EDTHLVDQKTDT. Residues 153 to 169 carry the Nuclear localization signal motif; it reads KRPATDDSSPQNKRANR. Thr157 carries the phosphothreonine; by CaMK1, PKB/AKT1, RPS6KA1, RPS6KA3 and PIM1 modification. The residue at position 170 (Thr170) is a Phosphothreonine.

This sequence belongs to the CDI family. As to quaternary structure, forms a ternary complex composed of CCNE1, CDK2 and CDKN1B. Interacts directly with CCNE1; the interaction is inhibited by CDK2-dependent phosphorylation. Interacts with COPS5, subunit of the COP9 signalosome complex; the interaction leads to CDKN1B degradation. Interacts with NUP50; the interaction leads to nuclear import and degradation of phosphorylated CDKN1B. Interacts with CCND1 and SNX6. Interacts (Thr-198-phosphorylated form) with 14-3-3 proteins, binds strongly YWHAQ, weakly YWHAE and YWHAH, but not YWHAB nor YWHAZ; the interaction with YWHAQ results in translocation to the cytoplasm. Interacts with AKT1 and LYN; the interactions lead to cytoplasmic mislocation, phosphorylation of CDKN1B and inhibition of cell cycle arrest. Forms a ternary complex with CCNA2 and CDK2; CDKN1B inhibits the kinase activity of CDK2 through conformational rearrangements. Interacts (unphosphorylated form) with CDK2. Forms a complex with CDK2 and SPDYA, but does not directly interact with SPDYA. Forms a ternary complex composed of cyclin D, CDK4 and CDKN1B. Interacts (phosphorylated on Tyr-88 and Tyr-89) with CDK4; the interaction is required for cyclin D and CDK4 complex assembly, induces nuclear translocation and activates the CDK4 kinase activity. Interacts with GRB2. Interacts with PIM1. Identified in a complex with SKP1, SKP2 and CKS1B. Interacts with UHMK1; the interaction leads to cytoplasmic mislocation, phosphorylation of CDKN1B and inhibition of cell cycle arrest. Also interacts with CDK1. Dephosphorylated by PPM1H, leading to CDKN1B stability. Post-translationally, phosphorylated; phosphorylation occurs on serine, threonine and tyrosine residues. Phosphorylation on Ser-10 is the major site of phosphorylation in resting cells, takes place at the G(0)-G(1) phase and leads to protein stability. Phosphorylation on other sites is greatly enhanced by mitogens, growth factors, MYC and in certain cancer cell lines. The phosphorylated form found in the cytoplasm is inactivate. Phosphorylation on Tyr-88 has no effect on binding CDK complexes. Ubiquitinated; in the cytoplasm by the KPC complex (composed of RNF123/KPC1 and UBAC1/KPC2) and, in the nucleus, by SCF(SKP2). The latter requires prior phosphorylation on Thr-187. Ubiquitinated; by a TRIM21-containing SCF(SKP2)-like complex; leads to its degradation. In terms of processing, subject to degradation in the lysosome. Interaction with SNX6 promotes lysosomal degradation.

Its subcellular location is the nucleus. The protein resides in the cytoplasm. It is found in the endosome. In terms of biological role, important regulator of cell cycle progression. Inhibits the kinase activity of CDK2 bound to cyclin A, but has little inhibitory activity on CDK2 bound to SPDYA. Involved in G1 arrest. Potent inhibitor of cyclin E- and cyclin A-CDK2 complexes. Forms a complex with cyclin type D-CDK4 complexes and is involved in the assembly, stability, and modulation of CCND1-CDK4 complex activation. Acts either as an inhibitor or an activator of cyclin type D-CDK4 complexes depending on its phosphorylation state and/or stoichometry. The sequence is that of Cyclin-dependent kinase inhibitor 1B (CDKN1B) from Neovison vison (American mink).